The chain runs to 331 residues: L-lactate dehydrogenase A chain (331 aa).

NAD(+) is bound by residues 29 to 57 and Arg-98; that span reads GMVG…MEDK. 3 residues coordinate substrate: Arg-105, Asn-137, and Arg-168. Residue Asn-137 coordinates NAD(+). His-192 acts as the Proton acceptor in catalysis. A substrate-binding site is contributed by Thr-247.

This sequence belongs to the LDH/MDH superfamily. LDH family. In terms of assembly, homotetramer.

The protein resides in the cytoplasm. It catalyses the reaction (S)-lactate + NAD(+) = pyruvate + NADH + H(+). Its pathway is fermentation; pyruvate fermentation to lactate; (S)-lactate from pyruvate: step 1/1. Interconverts simultaneously and stereospecifically pyruvate and lactate with concomitant interconversion of NADH and NAD(+). This Parachaenichthys charcoti (Charcot's dragonfish) protein is L-lactate dehydrogenase A chain (ldha).